The primary structure comprises 337 residues: Phosphate acyltransferase (337 aa).

The protein belongs to the PlsX family. In terms of assembly, homodimer. Probably interacts with PlsY.

It is found in the cytoplasm. The enzyme catalyses a fatty acyl-[ACP] + phosphate = an acyl phosphate + holo-[ACP]. It functions in the pathway lipid metabolism; phospholipid metabolism. In terms of biological role, catalyzes the reversible formation of acyl-phosphate (acyl-PO(4)) from acyl-[acyl-carrier-protein] (acyl-ACP). This enzyme utilizes acyl-ACP as fatty acyl donor, but not acyl-CoA. The chain is Phosphate acyltransferase from Polynucleobacter asymbioticus (strain DSM 18221 / CIP 109841 / QLW-P1DMWA-1) (Polynucleobacter necessarius subsp. asymbioticus).